We begin with the raw amino-acid sequence, 199 residues long: Imidazoleglycerol-phosphate dehydratase (199 aa).

The protein belongs to the imidazoleglycerol-phosphate dehydratase family.

The protein localises to the cytoplasm. It catalyses the reaction D-erythro-1-(imidazol-4-yl)glycerol 3-phosphate = 3-(imidazol-4-yl)-2-oxopropyl phosphate + H2O. Its pathway is amino-acid biosynthesis; L-histidine biosynthesis; L-histidine from 5-phospho-alpha-D-ribose 1-diphosphate: step 6/9. This is Imidazoleglycerol-phosphate dehydratase from Lactococcus lactis subsp. cremoris (strain MG1363).